We begin with the raw amino-acid sequence, 37 residues long: Large ribosomal subunit protein bL36 (37 aa).

This sequence belongs to the bacterial ribosomal protein bL36 family.

This Metamycoplasma arthritidis (strain 158L3-1) (Mycoplasma arthritidis) protein is Large ribosomal subunit protein bL36.